Here is a 413-residue protein sequence, read N- to C-terminus: Serine hydroxymethyltransferase (413 aa).

(6S)-5,6,7,8-tetrahydrofolate is bound by residues Leu115 and 119–121 (GHL). At Lys224 the chain carries N6-(pyridoxal phosphate)lysine.

This sequence belongs to the SHMT family. Homodimer. The cofactor is pyridoxal 5'-phosphate.

The protein localises to the cytoplasm. The catalysed reaction is (6R)-5,10-methylene-5,6,7,8-tetrahydrofolate + glycine + H2O = (6S)-5,6,7,8-tetrahydrofolate + L-serine. It participates in one-carbon metabolism; tetrahydrofolate interconversion. The protein operates within amino-acid biosynthesis; glycine biosynthesis; glycine from L-serine: step 1/1. In terms of biological role, catalyzes the reversible interconversion of serine and glycine with tetrahydrofolate (THF) serving as the one-carbon carrier. This reaction serves as the major source of one-carbon groups required for the biosynthesis of purines, thymidylate, methionine, and other important biomolecules. Also exhibits THF-independent aldolase activity toward beta-hydroxyamino acids, producing glycine and aldehydes, via a retro-aldol mechanism. This Mycoplasma capricolum subsp. capricolum (strain California kid / ATCC 27343 / NCTC 10154) protein is Serine hydroxymethyltransferase.